The following is a 65-amino-acid chain: Photosystem II reaction center protein Z (65 aa).

Transmembrane regions (helical) follow at residues 11–31 (LVLA…VIFA) and 44–64 (WLAC…DGIF).

It belongs to the PsbZ family. As to quaternary structure, PSII is composed of 1 copy each of membrane proteins PsbA, PsbB, PsbC, PsbD, PsbE, PsbF, PsbH, PsbI, PsbJ, PsbK, PsbL, PsbM, PsbT, PsbY, PsbZ, Psb30/Ycf12, at least 3 peripheral proteins of the oxygen-evolving complex and a large number of cofactors. It forms dimeric complexes.

Its subcellular location is the plastid. It localises to the chloroplast thylakoid membrane. Its function is as follows. May control the interaction of photosystem II (PSII) cores with the light-harvesting antenna, regulates electron flow through the 2 photosystem reaction centers. PSII is a light-driven water plastoquinone oxidoreductase, using light energy to abstract electrons from H(2)O, generating a proton gradient subsequently used for ATP formation. The sequence is that of Photosystem II reaction center protein Z from Euglena gracilis.